Here is a 480-residue protein sequence, read N- to C-terminus: Probable tRNA N6-adenosine threonylcarbamoyltransferase, mitochondrial (480 aa).

A mitochondrion-targeting transit peptide spans 1 to 86 (MVRLFLTLSP…NPNFDDNLVV (86 aa)). Residues His194 and His198 each contribute to the a divalent metal cation site. Substrate is bound by residues 217–221 (LISGG), Asp250, Gly265, Glu269, 373–374 (SN), and Thr401. Asp402 serves as a coordination point for a divalent metal cation.

This sequence belongs to the KAE1 / TsaD family. As to quaternary structure, homodimer. It depends on a divalent metal cation as a cofactor. In terms of tissue distribution, expressed in young developing leaves, roots, flowers and siliques.

Its subcellular location is the mitochondrion inner membrane. It carries out the reaction L-threonylcarbamoyladenylate + adenosine(37) in tRNA = N(6)-L-threonylcarbamoyladenosine(37) in tRNA + AMP + H(+). Its function is as follows. Required for the formation of a threonylcarbamoyl group on adenosine at position 37 (t(6)A37) in mitochondrial tRNAs that read codons beginning with adenine. Probably involved in the transfer of the threonylcarbamoyl moiety of threonylcarbamoyl-AMP (TC-AMP) to the N6 group of A37. Involved in mitochondrial genome maintenance. May have a role in embryonic development in plants. The sequence is that of Probable tRNA N6-adenosine threonylcarbamoyltransferase, mitochondrial from Arabidopsis thaliana (Mouse-ear cress).